The sequence spans 222 residues: Probable translocation protein y4yL (222 aa).

4 helical membrane-spanning segments follow: residues 6 to 26, 52 to 72, 158 to 178, and 182 to 202; these read PAIL…LAVV, PNIV…APVA, IGFL…TILM, and MSMV…FVAI.

The protein belongs to the FliP/MopC/SpaP family.

The protein resides in the cell membrane. Its function is as follows. Could be involved in the secretion of an unknown factor. The protein is Probable translocation protein y4yL of Sinorhizobium fredii (strain NBRC 101917 / NGR234).